Consider the following 268-residue polypeptide: Inositol monophosphatase 3 (268 aa).

The Mg(2+) site is built by E71, D91, L93, and D94. E71 contacts substrate. Residues 93–96, 194–196, E213, and D221 each bind substrate; these read LDGT and GSC. Mg(2+) is bound at residue D221.

This sequence belongs to the inositol monophosphatase superfamily. Requires Mg(2+) as cofactor. As to expression, expressed in the shoot apex, roots, stems, leaves, flowers and young and mature green fruits.

It carries out the reaction a myo-inositol phosphate + H2O = myo-inositol + phosphate. The protein operates within polyol metabolism; myo-inositol biosynthesis; myo-inositol from D-glucose 6-phosphate: step 2/2. Responsible for the provision of inositol required for synthesis of phosphatidylinositol and polyphosphoinositides. In Solanum lycopersicum (Tomato), this protein is Inositol monophosphatase 3 (IMP3).